We begin with the raw amino-acid sequence, 288 residues long: Homoserine kinase (288 aa).

78-88 lines the ATP pocket; that stretch reads PLARGLGSSSS.

This sequence belongs to the GHMP kinase family. Homoserine kinase subfamily.

It localises to the cytoplasm. It catalyses the reaction L-homoserine + ATP = O-phospho-L-homoserine + ADP + H(+). Its pathway is amino-acid biosynthesis; L-threonine biosynthesis; L-threonine from L-aspartate: step 4/5. In terms of biological role, catalyzes the ATP-dependent phosphorylation of L-homoserine to L-homoserine phosphate. The polypeptide is Homoserine kinase (Streptococcus agalactiae serotype III (strain NEM316)).